The following is a 1225-amino-acid chain: RNA-directed RNA polymerase VP2 (1225 aa).

In terms of domain architecture, RdRp catalytic spans 497-727; sequence LFLSFMPYTI…NSIVLLQQLV (231 aa).

It belongs to the reoviridae RNA-directed RNA polymerase family. As to quaternary structure, interacts with VP6.

The catalysed reaction is RNA(n) + a ribonucleoside 5'-triphosphate = RNA(n+1) + diphosphate. RNA-directed RNA polymerase that is involved in transcription and genome replication. Following infection, it catalyzes the synthesis of fully conservative plus strands. After core assembly, which consists in recruitment of one capped plus-strand for each genomic segments and polymerase complexes, the polymerase switches mode and catalyzes the synthesis of complementary minus-strands. The chain is RNA-directed RNA polymerase VP2 (S2) from Lymantria dispar (Gypsy moth).